The chain runs to 310 residues: tRNA dimethylallyltransferase (310 aa).

ATP is bound at residue 14-21; that stretch reads GPTASGKT. 16-21 serves as a coordination point for substrate; that stretch reads TASGKT. Interaction with substrate tRNA stretches follow at residues 39–42, 163–167, and 244–249; these read DSAL, QRLSR, and RCVGYR.

The protein belongs to the IPP transferase family. Monomer. Mg(2+) serves as cofactor.

It catalyses the reaction adenosine(37) in tRNA + dimethylallyl diphosphate = N(6)-dimethylallyladenosine(37) in tRNA + diphosphate. Its function is as follows. Catalyzes the transfer of a dimethylallyl group onto the adenine at position 37 in tRNAs that read codons beginning with uridine, leading to the formation of N6-(dimethylallyl)adenosine (i(6)A). The chain is tRNA dimethylallyltransferase from Tolumonas auensis (strain DSM 9187 / NBRC 110442 / TA 4).